Consider the following 256-residue polypeptide: 6-carboxyhexanoate--CoA ligase (256 aa).

Belongs to the BioW family. Homodimer. Mg(2+) is required as a cofactor.

The catalysed reaction is heptanedioate + ATP + CoA = 6-carboxyhexanoyl-CoA + AMP + diphosphate. Its pathway is metabolic intermediate metabolism; pimeloyl-CoA biosynthesis; pimeloyl-CoA from pimelate: step 1/1. Catalyzes the transformation of pimelate into pimeloyl-CoA with concomitant hydrolysis of ATP to AMP. The sequence is that of 6-carboxyhexanoate--CoA ligase from Bacillus amyloliquefaciens (strain ATCC 23350 / DSM 7 / BCRC 11601 / CCUG 28519 / NBRC 15535 / NRRL B-14393 / F).